A 318-amino-acid chain; its full sequence is Nuclear egress protein 1 (318 aa).

The CCCH-type zinc-finger motif lies at 129 to 239 (CLRLSPFGHS…HLLLQGTSLH (111 aa)).

Belongs to the herpesviridae NEC1 protein family. As to quaternary structure, forms a heterodimeric viral nuclear egress complex (NEC) with NEC2. Interacts with capsid vertex specific component 2/CVC2; this interaction directs the capsid to the host inner nuclear membrane to initiate budding. Phosphorylated at serine residues in the N-terminus. This phosphorylation regulates the localization within the inner nuclear membrane.

Its subcellular location is the host nucleus inner membrane. Plays an essential role in virion nuclear egress, the first step of virion release from infected cell. Within the host nucleus, NEC1 interacts with the newly formed capsid through the vertexes and directs it to the inner nuclear membrane by associating with NEC2. Induces the budding of the capsid at the inner nuclear membrane as well as its envelopment into the perinuclear space. There, the NEC1/NEC2 complex promotes the fusion of the enveloped capsid with the outer nuclear membrane and the subsequent release of the viral capsid into the cytoplasm where it will reach the secondary budding sites in the host Golgi or trans-Golgi network. The polypeptide is Nuclear egress protein 1 (Homo sapiens (Human)).